Here is a 66-residue protein sequence, read N- to C-terminus: Large ribosomal subunit protein bL35 (66 aa).

Belongs to the bacterial ribosomal protein bL35 family.

The chain is Large ribosomal subunit protein bL35 from Azorhizobium caulinodans (strain ATCC 43989 / DSM 5975 / JCM 20966 / LMG 6465 / NBRC 14845 / NCIMB 13405 / ORS 571).